The following is a 156-amino-acid chain: Ribonuclease H (156 aa).

An RNase H type-1 domain is found at 3-144; that stretch reads ELKLIHIFTD…CDVLARTAAE (142 aa). Mg(2+) is bound by residues D12, E50, D72, and D136.

The protein belongs to the RNase H family. Monomer. Mg(2+) serves as cofactor.

Its subcellular location is the cytoplasm. It catalyses the reaction Endonucleolytic cleavage to 5'-phosphomonoester.. Endonuclease that specifically degrades the RNA of RNA-DNA hybrids. This Shewanella baltica (strain OS223) protein is Ribonuclease H.